Reading from the N-terminus, the 396-residue chain is KiSS-1 receptor (396 aa).

The Extracellular segment spans residues 1 to 43 (MATEATLAPNVTWWAPSNASGCPGCGVNASDDPGSAPRPLDAW). N-linked (GlcNAc...) asparagine glycosylation is found at N10, N18, and N28. Residues 44–66 (LVPLFFATLMLLGLVGNSLVIYV) form a helical membrane-spanning segment. At 67-78 (ICRHKHMQTVTN) the chain is on the cytoplasmic side. The helical transmembrane segment at 79–101 (FYIANLAATDVTFLLCCVPFTAL) threads the bilayer. Residues 102 to 116 (LYPLPAWVLGDFMCK) are Extracellular-facing. C115 and C191 are disulfide-bonded. A helical membrane pass occupies residues 117–138 (FVNYIQQVSVQATCATLTAMSV). The Cytoplasmic segment spans residues 139–157 (DRWYVTVFPLRALHRRTPR). The chain crosses the membrane as a helical span at residues 158–180 (LALAVSLSIWVGSAAVSAPVLAL). Topologically, residues 181 to 203 (HRLSPGPRTYCSEAFPSRALERA) are extracellular. The chain crosses the membrane as a helical span at residues 204 to 224 (FALYNLLALYLLPLLATCACY). At 225-260 (GAMLRHLGRAAVRPAPTDGALQGQLLAQRAGAVRTK) the chain is on the cytoplasmic side. Residues 261–283 (VSRLVAAVVLLFAACWGPIQLFL) traverse the membrane as a helical segment. Residues 284–305 (VLQALGPSGAWHPRSYAAYAVK) lie on the Extracellular side of the membrane. Residues 306–330 (IWAHCMSYSNSALNPLLYAFLGSHF) form a helical membrane-spanning segment. Over 331–396 (RQAFCRVCPC…CAQSERTASL (66 aa)) the chain is Cytoplasmic. The segment at 349–396 (HTSAHSDRAATHTVPHSRAAHPVRIRSPEPGNPVVRSPCAQSERTASL) is disordered. A compositionally biased stretch (polar residues) spans 387–396 (CAQSERTASL).

This sequence belongs to the G-protein coupled receptor 1 family. As to expression, highest level in the heart and 15- and 17-day embryos. Low level in other tissues. Colocalized with gonadotropin-releasing hormone (GnRH) neurons in the hypothalamus.

The protein localises to the cell membrane. In terms of biological role, receptor for metastin (kisspeptin-52 or kp-52), a C-terminally amidated peptide of KiSS1. KiSS1 is a metastasis suppressor protein. Activation of the receptor inhibits cell proliferation and cell migration, key characteristics of tumor metastasis. The receptor is essential for normal gonadotropin-released hormone physiology and for puberty. The hypothalamic KiSS1/KISS1R system is a pivotal factor in central regulation of the gonadotropic axis at puberty and in adulthood. Analysis of the transduction pathways activated by the receptor identifies coupling to phospholipase C and intracellular calcium release through pertussis toxin-insensitive G(q) proteins. This chain is KiSS-1 receptor (Kiss1r), found in Mus musculus (Mouse).